The sequence spans 129 residues: Phosphoribosyl-AMP cyclohydrolase (129 aa).

Asp-85 contacts Mg(2+). Position 86 (Cys-86) interacts with Zn(2+). Mg(2+)-binding residues include Asp-87 and Asp-89. Positions 102 and 109 each coordinate Zn(2+).

The protein belongs to the PRA-CH family. As to quaternary structure, homodimer. Requires Mg(2+) as cofactor. Zn(2+) is required as a cofactor.

It localises to the cytoplasm. The enzyme catalyses 1-(5-phospho-beta-D-ribosyl)-5'-AMP + H2O = 1-(5-phospho-beta-D-ribosyl)-5-[(5-phospho-beta-D-ribosylamino)methylideneamino]imidazole-4-carboxamide. It functions in the pathway amino-acid biosynthesis; L-histidine biosynthesis; L-histidine from 5-phospho-alpha-D-ribose 1-diphosphate: step 3/9. Catalyzes the hydrolysis of the adenine ring of phosphoribosyl-AMP. The sequence is that of Phosphoribosyl-AMP cyclohydrolase from Methanococcus maripaludis (strain C6 / ATCC BAA-1332).